Consider the following 220-residue polypeptide: Probable L-serine dehydratase, beta chain (220 aa).

One can recognise an ACT domain in the interval 148-220; it reads AILVVHNDKF…NIIQVTKIAD (73 aa).

The protein belongs to the iron-sulfur dependent L-serine dehydratase family. Heterodimer of an alpha chain and a beta chain. [4Fe-4S] cluster serves as cofactor.

It catalyses the reaction L-serine = pyruvate + NH4(+). It participates in carbohydrate biosynthesis; gluconeogenesis. The chain is Probable L-serine dehydratase, beta chain (sdaAB) from Bacillus subtilis (strain 168).